A 142-amino-acid chain; its full sequence is MAKKVNAYIKLQVKAGQANPSPPVGPALGQHGVNIMEFCKAFNAKTQNLEPGLPTPVVITVYSDRSFTFITKTPPASVLLRKAAGIKSGSGRPNTEKVGTVNRAQLEEIANVKMPDLSAGSLDAAVRTIAGTARSMGLNVEE.

It belongs to the universal ribosomal protein uL11 family. As to quaternary structure, part of the ribosomal stalk of the 50S ribosomal subunit. Interacts with L10 and the large rRNA to form the base of the stalk. L10 forms an elongated spine to which L12 dimers bind in a sequential fashion forming a multimeric L10(L12)X complex. In terms of processing, one or more lysine residues are methylated.

Its function is as follows. Forms part of the ribosomal stalk which helps the ribosome interact with GTP-bound translation factors. This Hahella chejuensis (strain KCTC 2396) protein is Large ribosomal subunit protein uL11.